The chain runs to 240 residues: Acetoacetyl-CoA reductase (240 aa).

Residues 18–20 and 82–86 contribute to the NADP(+) site; these read RGI and NAGIT. Substrate contacts are provided by residues Ser134 and 141 to 144; that span reads NVGQ. Residue Tyr147 is the Proton acceptor of the active site. Residue 177-180 participates in NADP(+) binding; sequence PGFI. 178 to 179 provides a ligand contact to substrate; the sequence is GF.

Belongs to the short-chain dehydrogenases/reductases (SDR) family.

The enzyme catalyses a (3R)-3-hydroxyacyl-CoA + NADP(+) = a 3-oxoacyl-CoA + NADPH + H(+). The protein operates within biopolymer metabolism; poly-(R)-3-hydroxybutanoate biosynthesis. Its function is as follows. Catalyzes the reduction of acetoacetyl-CoA to (R)-3-hydroxybutyryl-CoA. When expressed in E.coli with Synechocystis PhaA, PhaC and PhaE confers the ability to synthesize up to 12% (w/w) poly(3-hydroxybutyrate) (PHB) depending on the carbon source. The chain is Acetoacetyl-CoA reductase from Synechocystis sp. (strain ATCC 27184 / PCC 6803 / Kazusa).